Reading from the N-terminus, the 277-residue chain is Probable CCR4-associated factor 1 homolog 10 (277 aa).

A divalent metal cation-binding residues include Asp40, Glu42, Asp166, and Asp235.

This sequence belongs to the CAF1 family. Component of the CCR4-NOT complex, at least composed of CRR4 and CAF1 proteins. A divalent metal cation is required as a cofactor.

The protein localises to the nucleus. It localises to the cytoplasm. It carries out the reaction Exonucleolytic cleavage of poly(A) to 5'-AMP.. Ubiquitous transcription factor required for a diverse set of processes. It is a component of the CCR4 complex involved in the control of gene expression. The protein is Probable CCR4-associated factor 1 homolog 10 (CAF1-10) of Arabidopsis thaliana (Mouse-ear cress).